Consider the following 276-residue polypeptide: Undecaprenyl-diphosphatase (276 aa).

The next 5 membrane-spanning stretches (helical) occupy residues 84–104 (YRLG…GLFF), 115–135 (LWVV…AEYV), 188–208 (FGFL…LPDA), 222–242 (QLLV…AWLL), and 250–270 (MYWF…LLAT).

Belongs to the UppP family.

The protein localises to the cell membrane. It catalyses the reaction di-trans,octa-cis-undecaprenyl diphosphate + H2O = di-trans,octa-cis-undecaprenyl phosphate + phosphate + H(+). Functionally, catalyzes the dephosphorylation of undecaprenyl diphosphate (UPP). Confers resistance to bacitracin. The protein is Undecaprenyl-diphosphatase of Mycobacterium tuberculosis (strain ATCC 25177 / H37Ra).